A 143-amino-acid chain; its full sequence is MAGQCLMQEIALYELFFFSLLKTGSFGLSARMEIFFSKTAWNLIRQTYPKVDYAGIVRNKFNIPNPSHSIIAWMALNSGLQQIELADFIPTNTVTLCGLCMLEDESAEHLFSAAMQGGFFLSSVRNVDMISLQPTFMMFANGL.

The protein resides in the mitochondrion. This is an uncharacterized protein from Arabidopsis thaliana (Mouse-ear cress).